The chain runs to 835 residues: DNA primase (835 aa).

The CHC2-type zinc finger occupies 778–817; sequence CLNFKHRLKTQSVRIFLSLHLTPDNCVTLTLMSQCFASKC.

This sequence belongs to the herpesviridae DNA primase family. Associates with the helicase and the primase-associated factor to form the helicase-primase factor.

Its subcellular location is the host nucleus. In terms of biological role, essential component of the helicase/primase complex. Unwinds the DNA at the replication forks and generates single-stranded DNA for both leading and lagging strand synthesis. The primase initiates primer synthesis and thereby produces large amount of short RNA primers on the lagging strand that the polymerase elongates using dNTPs. The sequence is that of DNA primase (56) from Saimiri sciureus (Common squirrel monkey).